Reading from the N-terminus, the 366-residue chain is tRNA/tmRNA (uracil-C(5))-methyltransferase (366 aa).

Positions 190, 218, 223, 239, and 299 each coordinate S-adenosyl-L-methionine. Cys324 acts as the Nucleophile in catalysis. The Proton acceptor role is filled by Glu358.

The protein belongs to the class I-like SAM-binding methyltransferase superfamily. RNA M5U methyltransferase family. TrmA subfamily.

The enzyme catalyses uridine(54) in tRNA + S-adenosyl-L-methionine = 5-methyluridine(54) in tRNA + S-adenosyl-L-homocysteine + H(+). It carries out the reaction uridine(341) in tmRNA + S-adenosyl-L-methionine = 5-methyluridine(341) in tmRNA + S-adenosyl-L-homocysteine + H(+). Dual-specificity methyltransferase that catalyzes the formation of 5-methyluridine at position 54 (m5U54) in all tRNAs, and that of position 341 (m5U341) in tmRNA (transfer-mRNA). The protein is tRNA/tmRNA (uracil-C(5))-methyltransferase of Shigella dysenteriae serotype 1 (strain Sd197).